The sequence spans 2595 residues: Glucosylceramide transporter ABCA12 (2595 aa).

A helical membrane pass occupies residues 23 to 43 (PLWTLVLILWPVIIFIILAIT). Asn-156, Asn-174, Asn-214, Asn-275, Asn-333, Asn-367, Asn-383, Asn-412, Asn-435, Asn-528, Asn-543, Asn-577, Asn-608, Asn-623, Asn-648, Asn-752, Asn-826, Asn-920, and Asn-963 each carry an N-linked (GlcNAc...) asparagine glycan. A run of 3 helical transmembrane segments spans residues 1065 to 1085 (VSYSLPIVLMVAWVVFIAAFV), 1112 to 1132 (FAWLIESVGFLLVTIVILIII), and 1145 to 1165 (FILFLYFSDYSFSVIAMSYLI). An N-linked (GlcNAc...) asparagine glycan is attached at Asn-1170. 3 helical membrane passes run 1174–1194 (IAALIGSLIYIIAFFPFIVLV), 1200–1220 (LSYVLKVFMSLLSPTAFSYAS), and 1250–1270 (FGWLCCLILADSFIYFLIAWY). The ABC transporter 1 domain maps to 1346 to 1577 (VALHGVTKIY…FGDGYHLTLT (232 aa)). Residue 1378 to 1385 (GPNGAGKT) coordinates ATP. 3 N-linked (GlcNAc...) asparagine glycosylation sites follow: Asn-1524, Asn-1663, and Asn-1704. A helical membrane pass occupies residues 1747 to 1767 (LIAQVILPIVFVTTAMGLGTL). N-linked (GlcNAc...) asparagine glycans are attached at residues Asn-1769, Asn-1819, Asn-1835, Asn-1876, Asn-1921, and Asn-1952. The next 4 helical transmembrane spans lie at 1979–1999 (ATISSLIDILVALSILMGYSV), 2035–2055 (FIYDMVFYLVPVAFSIGIIAI), 2072–2092 (LLLLLFGYATFSWMYLLAGLF), and 2103–2123 (VCVNLFFGINSIVSLSVVYFL). N-linked (GlcNAc...) asparagine glycosylation occurs at Asn-2178. Residues 2187-2207 (GAMFVALVSQGTMFFSLRLLI) traverse the membrane as a helical segment. N-linked (GlcNAc...) asparagine glycans are attached at residues Asn-2208 and Asn-2223. In terms of domain architecture, ABC transporter 2 spans 2254-2489 (VQLYCLTKTY…FGRGFTVKVH (236 aa)). Residues 2270 to 2290 (IIAVNNISIGIPAGECFGLLG) traverse the membrane as a helical segment. 2290–2297 (GVNGAGKT) is a binding site for ATP. N-linked (GlcNAc...) asparagine glycosylation is found at Asn-2318, Asn-2542, and Asn-2547. The segment at 2571–2595 (SYETADTSSQGSTISVDSQDDQMES) is disordered. A compositionally biased stretch (polar residues) spans 2574–2587 (TADTSSQGSTISVD).

The protein belongs to the ABC transporter superfamily. ABCA family. Interacts with NR1H2 and ABCA1; this interaction is required for ABCA1 localization to the cell surface and is necessary for its normal activity and stability. In terms of tissue distribution, mainly expressed in the stomach, placenta, testis and fetal brain. Expressed in the upper epidermal layers, mainly the granular layers, of skin. Expressed throughout the normal interfollicular epidermis with prominent expression in the stratum granulosum. Expressed in alpha and beta cells of pancreatic islets.

Its subcellular location is the cytoplasmic vesicle. It localises to the secretory vesicle membrane. The protein localises to the golgi apparatus membrane. It carries out the reaction ATP + H2O + phospholipidSide 1 = ADP + phosphate + phospholipidSide 2.. The enzyme catalyses a beta-D-glucosylceramide(in) + ATP + H2O = a beta-D-glucosylceramide(out) + ADP + phosphate + H(+). Transports lipids such as glucosylceramides from the outer to the inner leaflet of lamellar granules (LGs) membrane, whereby the lipids are finally transported to the keratinocyte periphery via the trans-Golgi network and LGs and released to the apical surface of the granular keratinocytes to form lipid lamellae in the stratum corneum of the epidermis, which is essential for skin barrier function. In the meantime, participates in the transport of the lamellar granules-associated proteolytic enzymes, in turn regulates desquamation and keratinocyte differentiation. Furthermore, is essential for the regulation of cellular cholesterol homeostasis by regulating ABCA1-dependent cholesterol efflux from macrophages through interaction with NR1H2 and ABCA1. Plays pleiotropic roles in regulating glucose stimulated insulin secretion from beta cells, regulating the morphology and fusion of insulin granules, lipid raft abundance and the actin cytoskeleton. Also involved in lung surfactant biogenesis. The protein is Glucosylceramide transporter ABCA12 of Homo sapiens (Human).